Reading from the N-terminus, the 295-residue chain is Protoheme IX farnesyltransferase (295 aa).

Helical transmembrane passes span 8–28 (VTKP…FLLA), 35–55 (YPLF…GCVF), 84–104 (ASLV…WFGA), 107–127 (LACW…SLYM), 132–152 (VYGT…GYCA), 162–182 (AILL…IAIF), 208–228 (ITLY…GGYA), 233–253 (LVVA…GYKV), and 264–284 (FVFS…DFMV).

The protein belongs to the UbiA prenyltransferase family. Protoheme IX farnesyltransferase subfamily.

The protein resides in the cell inner membrane. The catalysed reaction is heme b + (2E,6E)-farnesyl diphosphate + H2O = Fe(II)-heme o + diphosphate. The protein operates within porphyrin-containing compound metabolism; heme O biosynthesis; heme O from protoheme: step 1/1. Its function is as follows. Converts heme B (protoheme IX) to heme O by substitution of the vinyl group on carbon 2 of heme B porphyrin ring with a hydroxyethyl farnesyl side group. The protein is Protoheme IX farnesyltransferase of Klebsiella pneumoniae subsp. pneumoniae (strain ATCC 700721 / MGH 78578).